We begin with the raw amino-acid sequence, 458 residues long: MRNNFVPIILSFIIFLTPSIAEQEPSILSPVDQLLNKTSSYLDFSTKFNQPRIELTTSTIIAGLLSFLASSISSAGGIGGGGLYVPIMTIVAGLDLKTASSFSAFMVTGGSIANVGCNLFVRNPKSGGKTLIDFDLALLLEPCMLLGVSIGVICNLVFPNWLITSLFAVFLAWSTLKTFGNGLYYWRLESEMVKIRESNRIEEDDEEDKIESLKLPLLEDYQRPKRFPWIKLGVLVIIWLSYFAVYLLRGNKYGEGIISIEPCGNAYWLISSSQIPLTLFFTLWICFSDNVQSQQQSDYHVSVKDVEDLRSNDGARSNKCMFPVMALLAGVLGGVFGIGGGMLISPLLLQVGIAPEVTAATCSFMVLFSSTMSAIQYLLLGMEHTGTASIFAVICFVASLVGLKVVQKVITEYGRASIIVFSVGIVMALSIVLMTSYGALDVWNDYVSGRYMGFKLPC.

Helical transmembrane passes span 5 to 25 (FVPIILSFIIFLTPSIAEQEP), 53 to 73 (IELTTSTIIAGLLSFLASSIS), 74 to 94 (SAGGIGGGGLYVPIMTIVAGL), 101 to 121 (SFSAFMVTGGSIANVGCNLFV), 128 to 148 (GKTLIDFDLALLLEPCMLLGV), 150 to 170 (IGVICNLVFPNWLITSLFAVF), 227 to 247 (FPWIKLGVLVIIWLSYFAVYL), 267 to 287 (YWLISSSQIPLTLFFTLWICF), 324 to 344 (VMALLAGVLGGVFGIGGGMLI), 348 to 368 (LLQVGIAPEVTAATCSFMVLF), 386 to 406 (GTASIFAVICFVASLVGLKVV), and 418 to 438 (IIVFSVGIVMALSIVLMTSYG).

The protein belongs to the 4-toluene sulfonate uptake permease (TSUP) (TC 2.A.102) family.

The protein localises to the membrane. The sequence is that of Sulfite exporter TauE/SafE family protein 2 from Arabidopsis thaliana (Mouse-ear cress).